The following is a 420-amino-acid chain: Glutamyl-tRNA reductase (420 aa).

Substrate is bound by residues 49 to 52 (TCNR), S109, 114 to 116 (EPQ), and Q120. C50 acts as the Nucleophile in catalysis. 189-194 (GAGETI) contacts NADP(+).

It belongs to the glutamyl-tRNA reductase family. As to quaternary structure, homodimer.

It catalyses the reaction (S)-4-amino-5-oxopentanoate + tRNA(Glu) + NADP(+) = L-glutamyl-tRNA(Glu) + NADPH + H(+). It participates in porphyrin-containing compound metabolism; protoporphyrin-IX biosynthesis; 5-aminolevulinate from L-glutamyl-tRNA(Glu): step 1/2. Its function is as follows. Catalyzes the NADPH-dependent reduction of glutamyl-tRNA(Glu) to glutamate 1-semialdehyde (GSA). The polypeptide is Glutamyl-tRNA reductase (Sodalis glossinidius (strain morsitans)).